Reading from the N-terminus, the 676-residue chain is tRNA 5-methylaminomethyl-2-thiouridine biosynthesis bifunctional protein MnmC (676 aa).

Residues 1 to 241 (MFTVTPAKIY…KRECLCGIKN (241 aa)) form a tRNA (mnm(5)s(2)U34)-methyltransferase region. An FAD-dependent cmnm(5)s(2)U34 oxidoreductase region spans residues 268–676 (IGGGIASLFT…RKLLKGTEIK (409 aa)).

In the N-terminal section; belongs to the methyltransferase superfamily. tRNA (mnm(5)s(2)U34)-methyltransferase family. The protein in the C-terminal section; belongs to the DAO family. The cofactor is FAD.

The protein resides in the cytoplasm. It carries out the reaction 5-aminomethyl-2-thiouridine(34) in tRNA + S-adenosyl-L-methionine = 5-methylaminomethyl-2-thiouridine(34) in tRNA + S-adenosyl-L-homocysteine + H(+). Catalyzes the last two steps in the biosynthesis of 5-methylaminomethyl-2-thiouridine (mnm(5)s(2)U) at the wobble position (U34) in tRNA. Catalyzes the FAD-dependent demodification of cmnm(5)s(2)U34 to nm(5)s(2)U34, followed by the transfer of a methyl group from S-adenosyl-L-methionine to nm(5)s(2)U34, to form mnm(5)s(2)U34. This chain is tRNA 5-methylaminomethyl-2-thiouridine biosynthesis bifunctional protein MnmC, found in Histophilus somni (strain 2336) (Haemophilus somnus).